The primary structure comprises 301 residues: Tegument protein VP22 (301 aa).

The disordered stretch occupies residues 1–171 (MTSRRSVKSG…PTRSKTPAQG (171 aa)). Over residues 113–124 (RTPTTAPRAPRT) the composition is skewed to low complexity. The Nuclear localization signal signature appears at 163 to 166 (TRSK). Residues 174 to 267 (RKLHFSTAPP…LVNPDVVQDV (94 aa)) form an interaction with gE region. A Nuclear export signal motif is present at residues 232–244 (LNELLGITTIRVT). The segment covering 269-281 (AATATRGRSAASR) has biased composition (low complexity). A disordered region spans residues 269 to 301 (AATATRGRSAASRPTERPRAPARSASRPRRPVE).

The protein belongs to the alphaherpesvirinae VP22 tegument protein family. In terms of assembly, interacts with gE (via C-terminus); this interaction is necessary for the recruitment of VP22 to the Golgi and its packaging into virions. Interacts with gM (via C-terminus). Interacts with VP16; this interaction allows the formation of a tripartite complex composed of VP16, VP22 and UL41/VHS. According to a report interacts with gD (via C-terminus). According another publication, does not interact with gD. Interacts with host CGAS. Interacts with host SET; this interaction may interfere with SET-mediated nucleosomal deposition onto the viral genome. Interacts with the capsid-binding protein UL16. Highly phosphorylated in the host cell. Packaging is selective for underphosphorylated forms.

It is found in the virion tegument. It localises to the host cytoplasm. The protein resides in the host nucleus. The protein localises to the host Golgi apparatus. Tegument protein that plays different roles during the time course of infection. Participates in both the accumulation of viral mRNAs and viral protein translation at late time of infection. Modulates the RNase activity of the virion host shutoff protein UL41 probably to ensure necessary levels of key cellular mRNAs and proteins. Plays a role in microtubule reorganization that occurs after viral infection by stabilizing microtubule network. Finally, may prevent nucleosomal deposition onto the viral genome by interacting with and inhibiting host SET. Plays a role in the inhibition of host innate immune system by targeting the CGAS enzymatic activity which is the principal cytosolic DNA sensor that detects invading viral DNA. Acts by mediating disruption of liquid-like droplets in which CGAS is activated, thereby preventing CGAS activity. In Human herpesvirus 1 (strain 17) (HHV-1), this protein is Tegument protein VP22.